Consider the following 588-residue polypeptide: Disabled homolog 1 (588 aa).

A disordered region spans residues 1-26 (MSTETELQVAVKTSAKKDSRKKGQDR). The span at 15–26 (AKKDSRKKGQDR) shows a compositional bias: basic and acidic residues. One can recognise a PID domain in the interval 36–189 (KGEGVRYKAK…CEQAVYQTIL (154 aa)). A phosphotyrosine mark is found at Tyr198, Tyr220, and Tyr232. 4 disordered regions span residues 224–243 (TSQK…NSQP), 420–444 (LATV…QKMG), 451–470 (FQMV…PSLT), and 502–588 (LTPV…QDGS). The segment covering 424-436 (PGTNDSARSSPQS) has biased composition (polar residues). Low complexity-rich tracts occupy residues 503 to 512 (TPVTSTTPST) and 523 to 534 (SSPSKSSASHVS). A Phosphoserine; by CDK5 modification is found at Ser524. Acidic residues predominate over residues 537–546 (TADDIFEEGF).

As to quaternary structure, associates with the SH2 domains of SRC, FYN and ABL. Interacts (phosphorylated on tyrosine residues) with CRK and CRKL (via respective SH2 domain). Interacts with SIAH1, LRP8 and VLDLR. Interacts with LRP1. Interacts with APLP1 (via NPXY motif). Interacts with DAB2IP. Interacts with ZSWIM8. Post-translationally, phosphorylated by FYN on Tyr-198 and Tyr-220 upon reelin induction in embryonic neurons. Also found phosphorylated on Tyr-232 upon reelin induction. Also phosphorylated on Ser-524 independently of reelin signaling. In terms of processing, ubiquitinated by various cullin-5-RING E3 ubiquitin-protein ligase complexes (ECS complexes) following ligand-binding and phosphorylation, leading to its degradation. Ubiquitinated by the ECS(SOCS7) complex in the cortical plate of the developing cerebral cortex following ligand-binding and phosphorylation by FYN, leading to its degradation by the proteasome. Recognized by ZSWIM8 through a disorder targets misorder mechanism that eliminates misfolded DAB1 via ubiquitination and proteasomal degradation. In terms of tissue distribution, expressed mainly in brain. Specifically expressin in cortical neurons.

The protein resides in the cytoplasm. Functionally, signaling adapter of the reelin-mediated signaling pathway, which regulates the migration and differentiation of postmitotic neurons during brain development. Mediates intracellular transduction of Reelin signaling following reelin (RELN)-binding to its receptor: acts by docking proteins through its phosphotyrosine residues and PID domain. This Mus musculus (Mouse) protein is Disabled homolog 1.